Consider the following 24-residue polypeptide: Humanin-like 7 (24 aa).

The protein belongs to the humanin family. In terms of tissue distribution, expressed in testis.

It is found in the secreted. It localises to the cytoplasm. Plays a role as a neuroprotective and antiapoptotic factor. The polypeptide is Humanin-like 7 (Homo sapiens (Human)).